We begin with the raw amino-acid sequence, 260 residues long: MFVLIDNVLAYLLEQDDLFVTARFAIQGQIVSRRVNKIHISNITDVLLQQFISHTLPYNDNIVPKKILDSMRTAVRQLLEATACVSRECPLVKRSQDIKRARKRLLSDWYRLGADANMDAVLLVVNSAWRFLAVWRPFVNSIQHATQELYQNIAHYLLHGNVNIQRVTALLQLVMGQDDLLFSMDDVLQEVFRIQLYLNKMLPHNSHKWQKPSPFDSANLLLNFRDWTTDNALLQELLLSYPTINKNKHKNHSVPRLIQV.

This is an uncharacterized protein from Saccharomyces cerevisiae (strain ATCC 204508 / S288c) (Baker's yeast).